Here is a 249-residue protein sequence, read N- to C-terminus: Caffeoyl-CoA O-methyltransferase (249 aa).

K21 serves as a coordination point for substrate. Residues T63, E85, 87 to 88, S93, D111, and A140 each bind S-adenosyl-L-methionine; that span reads GV. A substrate-binding site is contributed by D162. D162 contacts a divalent metal cation. S-adenosyl-L-methionine is bound at residue D164. Positions 188 and 189 each coordinate a divalent metal cation. A substrate-binding site is contributed by N193.

It belongs to the class I-like SAM-binding methyltransferase superfamily. Cation-dependent O-methyltransferase family. CCoAMT subfamily. In terms of assembly, homodimer. Requires a divalent metal cation as cofactor.

It catalyses the reaction (E)-caffeoyl-CoA + S-adenosyl-L-methionine = (E)-feruloyl-CoA + S-adenosyl-L-homocysteine + H(+). It functions in the pathway aromatic compound metabolism; phenylpropanoid biosynthesis. Functionally, methylates caffeoyl-CoA to feruloyl-CoA and 5-hydroxyferuloyl-CoA to sinapoyl-CoA. Plays a role in the synthesis of feruloylated polysaccharides. Involved in the reinforcement of the plant cell wall. Also involved in the responding to wounding or pathogen challenge by the increased formation of cell wall-bound ferulic acid polymers. The protein is Caffeoyl-CoA O-methyltransferase of Eucalyptus gunnii (Cider gum).